A 1203-amino-acid polypeptide reads, in one-letter code: Zinc finger and BTB domain-containing protein 38 (1203 aa).

The BTB domain occupies 33-100 (CDVTIIVEDT…IYSSTVVVRR (68 aa)). K43 participates in a covalent cross-link: Glycyl lysine isopeptide (Lys-Gly) (interchain with G-Cter in SUMO2). S130 is modified (phosphoserine). Residues K145, K148, K151, and K260 each participate in a glycyl lysine isopeptide (Lys-Gly) (interchain with G-Cter in SUMO2) cross-link. The interval 230–334 (EAYRSQPLRE…PSETPGPPAA (105 aa)) is disordered. The span at 269-280 (TQTQDSDSTTEN) shows a compositional bias: polar residues. The interaction with CBFA2T3 stretch occupies residues 299–522 (PAPILSHSEP…RRYQCIFCLE (224 aa)). Over residues 313–322 (GDVHFPREDE) the composition is skewed to basic and acidic residues. The C2H2-type 1 zinc-finger motif lies at 341-363 (YNCSCCSKSFDSSTLLGAHMQLH). The C2H2-type 2; degenerate zinc-finger motif lies at 370–394 (FVCKYCNKQFTTLNRLDRHEQICMR). 3 C2H2-type zinc fingers span residues 459–481 (YSCV…ANVH), 487–509 (YPCH…EIWH), and 515–538 (YQCI…KSFH). Residues K549 and K556 each participate in a glycyl lysine isopeptide (Lys-Gly) (interchain with G-Cter in SUMO2) cross-link. 4 stretches are compositionally biased toward polar residues: residues 581-598 (RNSS…NESP), 607-628 (LPSS…TSSP), 635-644 (PSWQGTPTSA), and 731-741 (SNHQSPSQPVA). 2 disordered regions span residues 581–644 (RNSS…PTSA) and 731–776 (SNHQ…VPCN). Over residues 747-757 (KDSKPEADKAS) the composition is skewed to basic and acidic residues. Glycyl lysine isopeptide (Lys-Gly) (interchain with G-Cter in SUMO2) cross-links involve residues K750, K755, K796, K806, K813, K834, K842, and K849. Disordered regions lie at residues 857–882 (KPKY…SPLG) and 895–914 (FDEV…YYNY). Basic and acidic residues predominate over residues 866-877 (TLPRESDPETRG). Residues K915, K971, K976, K984, K988, K998, K1024, and K1033 each participate in a glycyl lysine isopeptide (Lys-Gly) (interchain with G-Cter in SUMO2) cross-link. 5 consecutive C2H2-type zinc fingers follow at residues 1017–1039 (YICE…MRCH), 1045–1067 (YQCK…ERIH), 1073–1095 (FICQ…ERIH), 1101–1123 (YHCQ…ERRH), and 1132–1154 (FACF…QKKH). Residues K1116, K1139, K1142, K1157, and K1190 each participate in a glycyl lysine isopeptide (Lys-Gly) (interchain with G-Cter in SUMO2) cross-link. The segment at 1172–1203 (NSDLLESQPCTDSEDSDQKDDIKKPLLKMSFE) is disordered.

In terms of assembly, interacts with CBFA2T3, ZBTB4 and RBBP6. In terms of processing, ubiquitinated by RBBP6; leading to its degradation by the proteasome. Widely expressed throughout the adult brain where it is found mainly in neurons. Also expressed in the adrenal medulla. Not detected in non-neural tissues including heart, spleen, liver and muscle. In the embryo, expressed in the developing brain and spinal cord but not in the migratory neural crest. Also expressed in the limbs, transiently in somites, and in the embryonic liver. In the embryonic neural tube, expression is restricted to late postmitotic neurons.

Its subcellular location is the nucleus. The protein localises to the chromosome. Transcriptional regulator with bimodal DNA-binding specificity. Binds with a higher affinity to methylated CpG dinucleotides in the consensus sequence 5'-CGCG-3' but can also bind to E-box elements (5'-CACGTG-3'). Can also bind specifically to a single methyl-CpG pair. Represses transcription in a methyl-CpG-dependent manner. Plays an important role in regulating DNA-replication and common fragile sites (CFS) stability in a RBBP6- and MCM10-dependent manner; represses expression of MCM10 which plays an important role in DNA-replication. Acts as a transcriptional activator. May be involved in the differentiation and/or survival of late postmitotic neurons. This chain is Zinc finger and BTB domain-containing protein 38, found in Rattus norvegicus (Rat).